Consider the following 420-residue polypeptide: D-tagatose-1,6-bisphosphate aldolase subunit GatZ (420 aa).

This sequence belongs to the GatZ/KbaZ family. GatZ subfamily. As to quaternary structure, forms a complex with GatY.

It participates in carbohydrate metabolism; D-tagatose 6-phosphate degradation; D-glyceraldehyde 3-phosphate and glycerone phosphate from D-tagatose 6-phosphate: step 2/2. Its function is as follows. Component of the tagatose-1,6-bisphosphate aldolase GatYZ that is required for full activity and stability of the Y subunit. Could have a chaperone-like function for the proper and stable folding of GatY. When expressed alone, GatZ does not show any aldolase activity. Is involved in the catabolism of galactitol. The sequence is that of D-tagatose-1,6-bisphosphate aldolase subunit GatZ from Escherichia coli O7:K1 (strain IAI39 / ExPEC).